A 966-amino-acid polypeptide reads, in one-letter code: MAVGMENATASGECGEILKPRTDKREYRRIVLKNSLEVLLISDPETDKCAASMNVSVGSFTDPEGLEGLAHFLEHMLFYASEKYPEEDSYSKYITEHGGSTNAYTSSEDTNYHFDINTDSFYEALDRFAQFFIQPLMSTDATMREIKAVDSEHQNNLLSDSWRMAQLQKHLSREDHPYHKFSTGNMDTLHVRPEENGVDTRSELIKFYDEHYSANIMHLVVYGKENLDKTQGLVEALFQGIRNTNQGIPRFPGQPCTLDHLQVLVKAVPIMQGHELSVSWPVTPSISHYEEAPCRYLGDLIGHEGEGSLFHALKILGWATGLYAGEADWSMEYSFFNVSIDLTDAGHEHMQDILGLLFEYIKVLQQSGVSQWIFDELSAICEAEFHYQAKIDPISYAVDISSNMKIYPTKHWLVGSSLPSKFNPAIVQKVLDELSPNNVRIFWESNKFEGQTDKVEPWYNTAYSLEKITKFTIQEWMQSAPDVNLLLPTPNVFIPTDFSLKDLKDKDIFPVLLRKTSYSRLWYKPDTKFFKPKAYVKMDFNCPLAVSSPDAAVLSDIFVWLLVDYLNEYAYYAQAAGLDYGLSLSDNGFELSLAGFNHKLRILLEAVIQKIAKFEVKPDRFSVIKETVTKAYQNNKFQQPHEQATNYCSLVLQDQIWPWTEELDALSHLEAEDLANFVPMLLSRTFVECYIAGNVEKDEAESMVKHIEDVLFTDSKPICRPLFPSQFLTNRVTELGTGMKHFYYQEGSNSSDENSALVHYIQVHKDEFSMNSKLQLFELIAKQDTFHQLRTIEQLGYITSLSLSNDSGVYGVQFIIQSSVKGPGHIDSRVESLLKDLESKFYNMSDEEFKSNVTNLIDMKLEKDKNLDEESWFYWAEIQTGTLKFNRIDAEVAALRLLKKDEWIDFFDEYIKVDAPNKKSLSICVYGNQHLKEMRNDKDKIPSTSIEIEDIVCFRKSQPLYGSLKL.

Position 71 (His-71) interacts with Zn(2+). Glu-74 acts as the Proton acceptor in catalysis. His-75 contributes to the Zn(2+) binding site. The active site involves Glu-145. Glu-152 is a Zn(2+) binding site.

Belongs to the peptidase M16 family. The cofactor is Zn(2+).

This chain is Insulin-degrading enzyme-like 2, found in Arabidopsis thaliana (Mouse-ear cress).